We begin with the raw amino-acid sequence, 830 residues long: MKLSRRDFMKANAAVAAAAAAGMTIPTVAKAVGETTNAIKWDKAPCRFCGTGCGVLVGTQNGRIVASQGDPDSPVNRGLNCIKGYFLPKIMYGKDRLTQPLLRMKDGQYDKEGDFTPISWEKAFDIMELKFKNALKEKGPTAVGMFGSGQWTVWEGYAALKLLKGGFRSNNLDPNARHCMASSVVGFMRTFGMDEPMGCYDDIEEADAFVLWGSNMAEMHPVLWSRMTSRRLTNAHVRIAVLSTYEHRSFELADNPIVFTPQTDLVIMNYIANYIIQNNAVDKDFLAQHVNFRRGATDIGYGLRPTHPLEKAAKNPGSDASEPMSFEDFKTFVAEYTLEKTAKMSGVPEDQLESLAQLYADPKVKLVSYWTMGFNQHTRGVWANNMCYNLHLLTGKISTPGSGPFSLTGQPSACGTAREVGTFSHRLPADMVVTNEKHRQIAETTWQLPAGTIPEKVGLHAVAQDRALKDGTLNAYWVMCNNNMQAGPNINEERMPGWRDPRNFIVVSDPYPTISALSADLILPTSMWVEKEGAYGNAERRTQFWRQQVPSPGEAKSDLWQIVEFAKRFNVEEVWPAELVNQKPEYRGKNLYEVLFANDVVSKYPLSEIPDDQLNDEARDFGFYIQKGLFEEYASFGRGHAHDLAPFDVYHQVRGLRWPVVDGKETLWRYREGFDPFVPKGEEVRFYGKPDGKAVIFALPYEPAAESPDQEYDLWLSTGRVLEHWHTGSMTRRVPELHRAFPEAVLFIHPLDAKARGLHRGDKVKVISRRGEVISLVETRGRNRPPRGLVYMPFFDAAQLVNNLTLDATDPLSKETDFKKCAVKLERVVA.

The tat-type signal signal peptide spans 1–31; sequence MKLSRRDFMKANAAVAAAAAAGMTIPTVAKA. One can recognise a 4Fe-4S Mo/W bis-MGD-type domain in the interval 39–95; the sequence is IKWDKAPCRFCGTGCGVLVGTQNGRIVASQGDPDSPVNRGLNCIKGYFLPKIMYGKD. The [4Fe-4S] cluster site is built by Cys46, Cys49, Cys53, and Cys81. Residues Lys83, Gln150, Asn175, Cys179, 212–219, 243–247, 262–264, Met372, Gln376, Asn482, 508–509, Lys531, Asp558, and 718–727 each bind Mo-bis(molybdopterin guanine dinucleotide); these read WGSNMAEM, STYEH, QTD, SD, and TGRVLEHWHT. Phe794 provides a ligand contact to substrate. The Mo-bis(molybdopterin guanine dinucleotide) site is built by Asn802 and Lys819.

Belongs to the prokaryotic molybdopterin-containing oxidoreductase family. NasA/NapA/NarB subfamily. Component of the periplasmic nitrate reductase NapAB complex composed of NapA and NapB. Requires [4Fe-4S] cluster as cofactor. Mo-bis(molybdopterin guanine dinucleotide) is required as a cofactor. In terms of processing, predicted to be exported by the Tat system. The position of the signal peptide cleavage has not been experimentally proven.

It is found in the periplasm. It carries out the reaction 2 Fe(II)-[cytochrome] + nitrate + 2 H(+) = 2 Fe(III)-[cytochrome] + nitrite + H2O. Its function is as follows. Catalytic subunit of the periplasmic nitrate reductase complex NapAB. Receives electrons from NapB and catalyzes the reduction of nitrate to nitrite. The protein is Periplasmic nitrate reductase of Yersinia pseudotuberculosis serotype IB (strain PB1/+).